A 102-amino-acid polypeptide reads, in one-letter code: MDKKVCVSILLAMLAIAALCRPMTELESARHGAQRKNSISDVSRRDLLASLTHEQKQLIMSQLLPELLSELSNAEDHLHPMRDRDYAGWMDFGRRSSEVTES.

The first 20 residues, 1–20, serve as a signal peptide directing secretion; the sequence is MDKKVCVSILLAMLAIAALC. The propeptide occupies 21–45; the sequence is RPMTELESARHGAQRKNSISDVSRR. The residue at position 86 (Y86) is a Sulfotyrosine. Residue F92 is modified to Phenylalanine amide. A propeptide spanning residues 96 to 102 is cleaved from the precursor; that stretch reads SSEVTES.

It belongs to the gastrin/cholecystokinin family. In terms of tissue distribution, expressed in antrum, duodenum, colon, pancreas, brain and testis. No expression found in kidney, lung, liver, skin or distal two-thirds of small intestine. In the brain, strongly expressed in the pituitary gland with moderate expression in the neural lobe, brain stem and hypothalamus.

The protein localises to the secreted. Its function is as follows. May control digestion processes. This chain is Gastrin/cholecystokinin-like peptide (GAST), found in Aquarana catesbeiana (American bullfrog).